A 404-amino-acid polypeptide reads, in one-letter code: WD repeat and SOCS box-containing protein 2 (404 aa).

WD repeat units lie at residues 105–148 (PPSR…LLLN), 151–191 (GHQD…KQIQ), 195–234 (GHLQWVYCCSISPDCSMLCSAAGEKSVFLWSMRSYTLIRK), 237–276 (GHQSSVVSCDFSPDSALLVTASYDTSVIMWDPYTGERLRS), and 291–330 (VHMSSLRSVCFSPEGLYLATVADDRLLRIWALELKAPVAF). An SOCS box domain is found at 356–404 (HVQFWTAPRVLSSLKHLCRKALRSFLTTYQVLALPIPKKMKEFLTYRTF).

Its pathway is protein modification; protein ubiquitination. Functionally, may be a substrate-recognition component of a SCF-like ECS (Elongin-Cullin-SOCS-box protein) E3 ubiquitin ligase complex which mediates the ubiquitination and subsequent proteasomal degradation of target proteins. In Mus musculus (Mouse), this protein is WD repeat and SOCS box-containing protein 2 (Wsb2).